Reading from the N-terminus, the 438-residue chain is Serine hydroxymethyltransferase (438 aa).

Residues leucine 133 and 137–139 each bind (6S)-5,6,7,8-tetrahydrofolate; that span reads GHL. Position 242 is an N6-(pyridoxal phosphate)lysine (lysine 242).

Belongs to the SHMT family. Homodimer. The cofactor is pyridoxal 5'-phosphate.

Its subcellular location is the cytoplasm. The catalysed reaction is (6R)-5,10-methylene-5,6,7,8-tetrahydrofolate + glycine + H2O = (6S)-5,6,7,8-tetrahydrofolate + L-serine. Its pathway is one-carbon metabolism; tetrahydrofolate interconversion. It functions in the pathway amino-acid biosynthesis; glycine biosynthesis; glycine from L-serine: step 1/1. In terms of biological role, catalyzes the reversible interconversion of serine and glycine with tetrahydrofolate (THF) serving as the one-carbon carrier. This reaction serves as the major source of one-carbon groups required for the biosynthesis of purines, thymidylate, methionine, and other important biomolecules. Also exhibits THF-independent aldolase activity toward beta-hydroxyamino acids, producing glycine and aldehydes, via a retro-aldol mechanism. The polypeptide is Serine hydroxymethyltransferase (Brucella ovis (strain ATCC 25840 / 63/290 / NCTC 10512)).